Reading from the N-terminus, the 453-residue chain is Ribulose bisphosphate carboxylase large chain (453 aa).

A propeptide spanning residues M1 to S2 is cleaved from the precursor. Position 3 is an N-acetylproline (P3). An N6,N6,N6-trimethyllysine modification is found at K14. Residues N123 and T173 each coordinate substrate. K175 acts as the Proton acceptor in catalysis. K177 contacts substrate. The Mg(2+) site is built by K201, D203, and E204. K201 is subject to N6-carboxylysine. Catalysis depends on H294, which acts as the Proton acceptor. 3 residues coordinate substrate: R295, H327, and S379.

This sequence belongs to the RuBisCO large chain family. Type I subfamily. Heterohexadecamer of 8 large chains and 8 small chains; disulfide-linked. The disulfide link is formed within the large subunit homodimers. Mg(2+) serves as cofactor. Post-translationally, the disulfide bond which can form in the large chain dimeric partners within the hexadecamer appears to be associated with oxidative stress and protein turnover.

The protein resides in the plastid. The protein localises to the chloroplast. The enzyme catalyses 2 (2R)-3-phosphoglycerate + 2 H(+) = D-ribulose 1,5-bisphosphate + CO2 + H2O. The catalysed reaction is D-ribulose 1,5-bisphosphate + O2 = 2-phosphoglycolate + (2R)-3-phosphoglycerate + 2 H(+). RuBisCO catalyzes two reactions: the carboxylation of D-ribulose 1,5-bisphosphate, the primary event in carbon dioxide fixation, as well as the oxidative fragmentation of the pentose substrate in the photorespiration process. Both reactions occur simultaneously and in competition at the same active site. In Phuopsis stylosa (Caucasian crosswort), this protein is Ribulose bisphosphate carboxylase large chain.